A 157-amino-acid chain; its full sequence is Small ribosomal subunit protein uS7 (157 aa).

It belongs to the universal ribosomal protein uS7 family. As to quaternary structure, part of the 30S ribosomal subunit. Contacts proteins S9 and S11.

In terms of biological role, one of the primary rRNA binding proteins, it binds directly to 16S rRNA where it nucleates assembly of the head domain of the 30S subunit. Is located at the subunit interface close to the decoding center, probably blocks exit of the E-site tRNA. The chain is Small ribosomal subunit protein uS7 from Chlamydia pneumoniae (Chlamydophila pneumoniae).